The chain runs to 88 residues: Small ribosomal subunit protein uS15 (88 aa).

This sequence belongs to the universal ribosomal protein uS15 family. In terms of assembly, part of the 30S ribosomal subunit. Forms a bridge to the 50S subunit in the 70S ribosome, contacting the 23S rRNA.

One of the primary rRNA binding proteins, it binds directly to 16S rRNA where it helps nucleate assembly of the platform of the 30S subunit by binding and bridging several RNA helices of the 16S rRNA. In terms of biological role, forms an intersubunit bridge (bridge B4) with the 23S rRNA of the 50S subunit in the ribosome. The polypeptide is Small ribosomal subunit protein uS15 (Mycoplasma capricolum subsp. capricolum (strain California kid / ATCC 27343 / NCTC 10154)).